A 430-amino-acid chain; its full sequence is tRNA(Ile)-lysidine synthase (430 aa).

24–29 (SGGLDS) contacts ATP.

It belongs to the tRNA(Ile)-lysidine synthase family.

Its subcellular location is the cytoplasm. The catalysed reaction is cytidine(34) in tRNA(Ile2) + L-lysine + ATP = lysidine(34) in tRNA(Ile2) + AMP + diphosphate + H(+). Its function is as follows. Ligates lysine onto the cytidine present at position 34 of the AUA codon-specific tRNA(Ile) that contains the anticodon CAU, in an ATP-dependent manner. Cytidine is converted to lysidine, thus changing the amino acid specificity of the tRNA from methionine to isoleucine. The polypeptide is tRNA(Ile)-lysidine synthase (Haemophilus influenzae (strain PittGG)).